We begin with the raw amino-acid sequence, 955 residues long: Auxin response factor 11 (955 aa).

Residues 143 to 245 (FCKNLTASDT…QLLLGVRRAT (103 aa)) constitute a DNA-binding region (TF-B3). Residues 518 to 543 (ESKLNATSRDPRNTDSYTSRSTSEQN) show a composition bias toward polar residues. Disordered stretches follow at residues 518-573 (ESKL…LSSA) and 609-646 (TQGNFVGQPHGHQVEQKGVLSPPKVESSKSPDGGKSVN). The span at 551 to 560 (KTRRSKKGLP) shows a compositional bias: basic residues. Positions 852-936 (RTYTKVQKQG…RCIRILSPSE (85 aa)) constitute a PB1 domain.

Belongs to the ARF family. In terms of assembly, homodimers and heterodimers.

It is found in the nucleus. Its function is as follows. Auxin response factors (ARFs) are transcriptional factors that bind specifically to the DNA sequence 5'-TGTCTC-3' found in the auxin-responsive promoter elements (AuxREs). The chain is Auxin response factor 11 (ARF11) from Oryza sativa subsp. indica (Rice).